Consider the following 237-residue polypeptide: RNA polymerase sigma-28 factor (237 aa).

Positions 1–19 (MSLFAAIGYMVREVFVFVS) are excised as a propeptide. The Polymerase core binding motif lies at 77 to 90 (DLISIGTIGLIKAI). The segment at residues 197-206 (QREIAKALGI) is a DNA-binding region (H-T-H motif).

The protein belongs to the sigma-70 factor family. Post-translationally, proteolytically cleaved in the N-terminus probably by a SpoIIGA homolog to yield the active peptide.

Sigma factors are initiation factors that promote the attachment of RNA polymerase to specific initiation sites and are then released. This sigma factor directs the transcription of crystal protein genes, a sporulation-regulated event. The protein is RNA polymerase sigma-28 factor (sigK) of Bacillus thuringiensis subsp. kurstaki.